Consider the following 173-residue polypeptide: Alpha-crystallin A chain (173 aa).

N-acetylmethionine is present on methionine 1. The segment at 1–63 (MDVTIQHPWF…RTVLDSGISE (63 aa)) is required for complex formation with BFSP1 and BFSP2. A Deamidated glutamine; partial modification is found at glutamine 6. Residue serine 45 is modified to Phosphoserine. Glutamine 50 carries the post-translational modification Deamidated glutamine; partial. Positions 52–162 (LFRTVLDSGI…GHSERAIPVS (111 aa)) constitute a sHSP domain. N6-acetyllysine is present on lysine 70. Position 90 is a deamidated glutamine; partial (glutamine 90). Position 99 is an N6-acetyllysine (lysine 99). Residue histidine 100 coordinates Zn(2+). Position 101 is a deamidated asparagine; partial (asparagine 101). Zn(2+) is bound by residues glutamate 102 and histidine 107. Serine 122 bears the Phosphoserine mark. Asparagine 123 carries the deamidated asparagine; partial modification. Positions 145–173 (KVQSGLDAGHSERAIPVSREEKPSSAPSS) are disordered. Position 147 is a deamidated glutamine; partial (glutamine 147). Residues 153–167 (GHSERAIPVSREEKP) show a composition bias toward basic and acidic residues. Histidine 154 provides a ligand contact to Zn(2+). O-linked (GlcNAc) serine glycosylation occurs at serine 162.

It belongs to the small heat shock protein (HSP20) family. Heteromer composed of three CRYAA and one CRYAB subunits. Inter-subunit bridging via zinc ions enhances stability, which is crucial as there is no protein turn over in the lens. Can also form homodimers and homotetramers (dimers of dimers) which serve as the building blocks of homooligomers. Within homooligomers, the zinc-binding motif is created from residues of 3 different molecules. His-100 and Glu-102 from one molecule are ligands of the zinc ion, and His-107 and His-154 residues from additional molecules complete the site with tetrahedral coordination geometry. Part of a complex required for lens intermediate filament formation composed of BFSP1, BFSP2 and CRYAA. Acetylation at Lys-70 may increase chaperone activity. In terms of processing, undergoes age-dependent proteolytical cleavage at the C-terminus.

It is found in the cytoplasm. The protein localises to the nucleus. Contributes to the transparency and refractive index of the lens. Acts as a chaperone, preventing aggregation of various proteins under a wide range of stress conditions. Required for the correct formation of lens intermediate filaments as part of a complex composed of BFSP1, BFSP2 and CRYAA. The protein is Alpha-crystallin A chain (CRYAA) of Oryctolagus cuniculus (Rabbit).